Consider the following 89-residue polypeptide: Large ribosomal subunit protein bL27 (89 aa).

Belongs to the bacterial ribosomal protein bL27 family.

The sequence is that of Large ribosomal subunit protein bL27 from Cereibacter sphaeroides (strain ATCC 17029 / ATH 2.4.9) (Rhodobacter sphaeroides).